We begin with the raw amino-acid sequence, 169 residues long: Putative glycine cleavage system H protein, mitochondrial (169 aa).

Residues 60 to 142 (VGTVGITSYA…EEEGWICKIK (83 aa)) enclose the Lipoyl-binding domain. Lys101 is subject to N6-lipoyllysine. Residue Ser131 is modified to Phosphoserine.

Belongs to the GcvH family. In terms of assembly, component of the glycine decarboxylase complex (GDC), which is composed of four proteins: P, T, L and H. (R)-lipoate serves as cofactor.

The protein localises to the mitochondrion. Functionally, the glycine cleavage system (glycine decarboxylase complex) catalyzes the degradation of glycine. The H protein shuttles the methylamine group of glycine from the P protein to the T protein. The chain is Putative glycine cleavage system H protein, mitochondrial (gcv3) from Schizosaccharomyces pombe (strain 972 / ATCC 24843) (Fission yeast).